A 527-amino-acid chain; its full sequence is Neutrophil cytosol factor 2 (527 aa).

TPR repeat units follow at residues 37 to 70 (SRIC…DKHL), 71 to 104 (AVSY…LRGN), and 121 to 154 (CEVL…KSEP). Residue T233 is modified to Phosphothreonine. An SH3 1 domain is found at 240-299 (LEGEAHRVLFGFVPETPEELQVMPGNIVFVLKKGNDNWATVMFNGQKGLVPCNYLEPVEL). Residues 304–345 (QQQPQEETSLESDIPAPPSSSAPGRPQLSPGQKGKEEPKQEI) form a disordered region. S324 carries the post-translational modification Phosphoserine. Basic and acidic residues predominate over residues 336 to 345 (KGKEEPKQEI). The PB1 domain maps to 352–430 (SYTLKVHYKY…YCLTLWCENT (79 aa)). Position 400 is a phosphoserine (S400). Residues 434–457 (QGFPDEPEESKKSDANNQTTEPEL) are disordered. The region spanning 458 to 517 (KEGSKVVALFSYEATQPEDLEFLEGDVILVISTVNEQWLEGECKGKVGIFPKAFVEQHPT) is the SH3 2 domain.

It belongs to the NCF2/NOXA1 family. In terms of assembly, component of the phagocyte NADPH oxidase complex composed of an obligatory core heterodimer formed by the membrane proteins CYBA and CYBB and the cytosolic regulatory subunits NCF1/p47-phox, NCF2/p67-phox, NCF4/p40-phox and the small GTPase RAC1 or RAC2. Part of a cytosolic complex composed at least by NCF1, NCF2 and NCF4. Interacts with NCF4. Interacts (via the C-terminal SH3 domain) with NCF1 (via C-terminus). Interacts with SYTL1 and RAC1. May interact with NOXO1. Interacts with S100A8 and calprotectin (S100A8/9). Interacts with GBP7 (via GB1/RHD3-type G domain). Interacts with CYBB; the interaction is enhanced in the presence of GBP7.

Its subcellular location is the cytoplasm. In terms of biological role, subunit of the phagocyte NADPH oxidase complex that mediates the transfer of electrons from cytosolic NADPH to O2 to produce the superoxide anion (O2(-)). In the activated complex, electrons are first transferred from NADPH to flavin adenine dinucleotide (FAD) and subsequently transferred via two heme molecules to molecular oxygen, producing superoxide through an outer-sphere reaction. Activation of the NADPH oxidase complex is initiated by the assembly of cytosolic subunits of the NADPH oxidase complex with the core NADPH oxidase complex to form a complex at the plasma membrane or phagosomal membrane. This activation process is initiated by phosphorylation dependent binding of the cytosolic NCF1/p47-phox subunit to the C-terminus of CYBA/p22-phox. The sequence is that of Neutrophil cytosol factor 2 from Bos taurus (Bovine).